The primary structure comprises 174 residues: Transcription factor bHLH168 (174 aa).

Residues serine 14–leucine 63 enclose the bHLH domain.

The protein belongs to the bHLH protein family.

It localises to the nucleus. This Arabidopsis thaliana (Mouse-ear cress) protein is Transcription factor bHLH168.